The chain runs to 128 residues: Large ribosomal subunit protein eL22 (128 aa).

Belongs to the eukaryotic ribosomal protein eL22 family. Component of the large ribosomal subunit.

The protein resides in the cytoplasm. Functionally, component of the large ribosomal subunit. The ribosome is a large ribonucleoprotein complex responsible for the synthesis of proteins in the cell. The chain is Large ribosomal subunit protein eL22 (RPL22) from Gallus gallus (Chicken).